The primary structure comprises 103 residues: Large ribosomal subunit protein bL21 (103 aa).

This sequence belongs to the bacterial ribosomal protein bL21 family. As to quaternary structure, part of the 50S ribosomal subunit. Contacts protein L20.

Functionally, this protein binds to 23S rRNA in the presence of protein L20. The protein is Large ribosomal subunit protein bL21 of Mycobacterium sp. (strain JLS).